The chain runs to 88 residues: uncharacterized protein (88 aa).

The first 25 residues, 1 to 25 (MRAAFWVGCAALLLSACSSEPVQQA), serve as a signal peptide directing secretion.

This is an uncharacterized protein from Escherichia coli O6:H1 (strain CFT073 / ATCC 700928 / UPEC).